Consider the following 190-residue polypeptide: Potassium-transporting ATPase KdpC subunit (190 aa).

A helical transmembrane segment spans residues 10 to 30 (LLVFLTILTGGVYPLATTVLG).

Belongs to the KdpC family. The system is composed of three essential subunits: KdpA, KdpB and KdpC.

It is found in the cell inner membrane. Functionally, part of the high-affinity ATP-driven potassium transport (or Kdp) system, which catalyzes the hydrolysis of ATP coupled with the electrogenic transport of potassium into the cytoplasm. This subunit acts as a catalytic chaperone that increases the ATP-binding affinity of the ATP-hydrolyzing subunit KdpB by the formation of a transient KdpB/KdpC/ATP ternary complex. In Cronobacter sakazakii (strain ATCC BAA-894) (Enterobacter sakazakii), this protein is Potassium-transporting ATPase KdpC subunit.